We begin with the raw amino-acid sequence, 876 residues long: MATERYNPRDAEPRWQQKWNEDKVFETDNSDPREKYYVLEMFPYPSGRIHMGHVRNYAMGDVVARYKRARGYNVLHPMGWDAFGMPAENAAMERGVHPASWTYQNIASMKAQLKAMGLSLDWSREFATCDVDYYQHQQHLFLDFLEKGLVYRKQSKVNWDPVDNTVLANEQVIDGRGWRSGALVEQRELTQWFFKITDFSQELLDALDTLDQWPEKVRLMQKNWIGRSEGLTVRWEIVPETAPAGETEITVYTTRPDTLFGASFLAIAADHPLAKDAAAKNVEIEAFCEECRRAGTSLAALETAEKKGLDTGIRVRHPLDPSWELPVYIANFVLMDYGTGAIFGCPSGDQRDLDFARKYGLPVVPVVMPTDGDAASFSVGDTAYDGEGVMINSRFLDGKTTEEAFNIVADRLSAASLGNAPQGQRMINFRLRDWGISRQRYWGCPIPVIHCDACGVVPVPKKDLPVKLPEDVTFDQPGNPLDRHPTWRHVACPNCGKDARRETDTMDTFVDSSWYFTRFTAPWEAKPTDPEAANRWLPVDQYIGGIEHAILHLLYSRFFTRAMRETGHVAATEPFKGLFTQGMVVHETYSRGAGASREWVAPADIRIEEIDGKRRAFLLASDEEVAIGSIEKMSKSKKNVVDPDDIIASYGADTARFFVLSDSPPERDVIWSEAGVEGAHRFTQRLWRLISEAADCLSAVAPAPASEGEALTVSQAAHKTLKAVQNDYDKLWFNKAVARIYELVNALAAPLTRVAAGEGDIAYRAAVRDAAEILIQLVAPMTPHLAEECWAALGNAGLLARTDWPRYDETLVMENDVVLPVQINGKKRAELTISRDADQNAVTNAVLDLDAVKNALNGQAPKKIIVVPQRIVNIVV.

The 'HIGH' region motif lies at 43–53; it reads PYPSGRIHMGH. The 'KMSKS' region signature appears at 632–636; the sequence is KMSKS. Position 635 (lysine 635) interacts with ATP.

It belongs to the class-I aminoacyl-tRNA synthetase family.

Its subcellular location is the cytoplasm. It catalyses the reaction tRNA(Leu) + L-leucine + ATP = L-leucyl-tRNA(Leu) + AMP + diphosphate. The sequence is that of Leucine--tRNA ligase from Rhizobium etli (strain ATCC 51251 / DSM 11541 / JCM 21823 / NBRC 15573 / CFN 42).